The sequence spans 1221 residues: Fibulin-2 (1221 aa).

The first 26 residues, 1–26, serve as a signal peptide directing secretion; the sequence is MLLQESAGVWLALALVTALTPSPSMA. The segment at 27–176 is subdomain NA (Cys-rich); sequence VPWQDCTGAE…ELICYQLPGC (150 aa). Residues 27 to 434 are n; that stretch reads VPWQDCTGAE…DGSTKDLIET (408 aa). A subdomain NB (Cys-free) region spans residues 177 to 434; it reads HGNFSDAEEG…DGSTKDLIET (258 aa). N179 carries an N-linked (GlcNAc...) asparagine glycan. Disordered regions lie at residues 248–329 and 341–399; these read PTAA…LIPD and GAAP…PQHP. The segment covering 270 to 283 has biased composition (acidic residues); the sequence is DTEEDEEEEEEETL. Residues 312–322 show a composition bias toward basic and acidic residues; that stretch reads QEKEAEAKAGP. Residues 421–423 carry the Cell attachment site motif; sequence RGD. 11 cysteine pairs are disulfide-bonded: C435/C462, C436/C469, C449/C470, C479/C508, C492/C509, C511/C535, C512/C542, C525/C543, C598/C610, C606/C619, and C621/C634. 3 Anaphylatoxin-like domains span residues 435–477, 478–510, and 511–543; these read CCAA…LKEK, SCVA…QCCD, and CCGL…LSCC. N497 carries N-linked (GlcNAc...) asparagine glycosylation. Residues 594-635 enclose the EGF-like 1; calcium-binding domain; the sequence is DQDECLMLPGELCQHLCINTVGSYRCACFPGFELQGDGRTCR. The segment at 633–661 is disordered; it reads TCRPDRGAPQLDTARESAPRSESAQVSPN. Positions 652 to 661 are enriched in polar residues; it reads RSESAQVSPN. The 40-residue stretch at 669–708 folds into the EGF-like 2 domain; sequence QPNTCKDNGPCRQVCRVVGDTAMCSCFPGYAIMADGVSCE. Intrachain disulfides connect C673–C683, C679–C692, C694–C707, C713–C726, and C720–C735. An EGF-like 3; calcium-binding domain is found at 709–755; the sequence is DQDECLMGTHDCSWKQFCVNTLGSFYCVNHTVLCAEGYILNAHRKCV. An N-linked (GlcNAc...) asparagine glycan is attached at N737. A disulfide bridge links C742 with C754. Residues 756–800 enclose the EGF-like 4; calcium-binding domain; sequence DINECVTDLHTCTRAEHCVNTPGSFQCYKALTCEPGYVLTDGECT. The EGF-like 5; calcium-binding domain occupies 801–846; sequence DVDECVTGTHNCQAGFSCQNTKGSFYCQARQRCMDGFLQDPEGNCV. Cystine bridges form between C805–C818, C812–C827, and C833–C845. Residues 847 to 894 enclose the EGF-like 6; calcium-binding domain; it reads DINECTSLLEPCRSGFSCINTVGSYTCQRNPLVCGRGYHANEEGSECV. Residues 895–937 enclose the EGF-like 7; calcium-binding domain; it reads DVNECETGVHRCGEGQLCYNLPGSYRCDCKPGFQRDAFGRTCI. Disulfide bonds link C899–C912, C906–C921, C923–C936, C942–C954, C950–C963, C965–C978, C984–C993, C989–C1002, C1004–C1017, C1023–C1035, C1031–C1044, C1046–C1060, C1066–C1079, C1073–C1088, and C1093–C1105. Positions 938-979 constitute an EGF-like 8; calcium-binding domain; that stretch reads DVNECWVSPGRLCQHTCENTPGSYRCSCAAGFLLAADGKHCE. One can recognise an EGF-like 9; calcium-binding domain in the interval 980–1018; that stretch reads DVNECETRRCSQECANIYGSYQCYCRQGYQLAEDGHTCT. The EGF-like 10; calcium-binding domain occupies 1019–1061; the sequence is DIDECAQGAGILCTFRCVNVPGSYQCACPEQGYTMMANGRSCK. One can recognise an EGF-like 11; calcium-binding domain in the interval 1062–1106; sequence DLDECALGTHNCSEAETCHNIQGSFRCLRFDCPPNYVRVSETKCE. An N-linked (GlcNAc...) asparagine glycan is attached at N1072. A domain III region spans residues 1111–1221; sequence QDITECQTSP…MYIFFTTFAP (111 aa).

The protein belongs to the fibulin family. Homotrimer; disulfide-linked. Interacts with LAMA2. Interacts with FBN1 (via N-terminal domain). Forms a ternary complex with ELN and FBN1. As to expression, component of both basement membranes and other connective tissues.

Its subcellular location is the secreted. The protein localises to the extracellular space. It is found in the extracellular matrix. Its function is as follows. Its binding to fibronectin and some other ligands is calcium dependent. May act as an adapter that mediates the interaction between FBN1 and ELN. The chain is Fibulin-2 (Fbln2) from Mus musculus (Mouse).